A 470-amino-acid chain; its full sequence is Sorting nexin-17 (470 aa).

The PX domain occupies 1-109 (MHFSIPETES…SFLRRAQQET (109 aa)). Positions 36, 38, 62, and 75 each coordinate a 1,2-diacyl-sn-glycero-3-phospho-(1D-myo-inositol-3-phosphate). One can recognise a Ras-associating domain in the interval 115–206 (EEVSLEVLLS…YKIVLRKSYW (92 aa)). Residues 115 to 432 (EEVSLEVLLS…DASRESMVKL (318 aa)) form an FERM-like region. The segment at 270–432 (GYLRFDACVA…DASRESMVKL (163 aa)) is PTB-like F3 module. Ser-336, Ser-407, Ser-409, Ser-415, Ser-421, Ser-437, and Ser-440 each carry phosphoserine. The tract at residues 401–426 (GGTLRRSDSQQAVKSPPLLESPDASR) is disordered.

The protein belongs to the sorting nexin family. As to quaternary structure, monomer. Interacts with APP (via cytoplasmic YXNPXY motif). Interacts with KIF1B. Interacts with the C-termini of P-selectin, PTC, LDLR, VLDLR, LRP1 and LRP8. Interacts with KRIT1 (via N-terminus). Interacts with HRAS. Interacts with ITGB1 and ITGB5 (via NPxY motif). Interacts with CCDC22 and CCDC93; the interaction associates SNX17 with the CCC complex. Interacts (via C-terminus) with VPS26C and VPS35L; the interactions are direct and associate SNX17 with the retriever complex. As to expression, detected in brain neurons (at protein level). Broadly expressed, with highest levels in brain and placenta, and lowest levels in colon, intestine and liver.

It is found in the cytoplasm. Its subcellular location is the early endosome. It localises to the cytoplasmic vesicle membrane. Its function is as follows. Critical regulator of endosomal recycling of numerous surface proteins, including integrins, signaling receptor and channels. Binds to NPxY sequences in the cytoplasmic tails of target cargos. Associates with retriever and CCC complexes to prevent lysosomal degradation and promote cell surface recycling of numerous cargos such as integrins ITGB1, ITGB5 and their associated alpha subunits. Also required for maintenance of normal cell surface levels of APP and LRP1. Interacts with membranes containing phosphatidylinositol 3-phosphate (PtdIns(3P)). The protein is Sorting nexin-17 (Snx17) of Mus musculus (Mouse).